A 175-amino-acid chain; its full sequence is Co-chaperone protein HscB homolog (175 aa).

A J domain is found at 7–79; that stretch reads SHFELFHLPA…LKRATYLLHL (73 aa).

This sequence belongs to the HscB family. In terms of assembly, interacts with HscA and stimulates its ATPase activity.

Its function is as follows. Co-chaperone involved in the maturation of iron-sulfur cluster-containing proteins. Seems to help targeting proteins to be folded toward HscA. In Burkholderia thailandensis (strain ATCC 700388 / DSM 13276 / CCUG 48851 / CIP 106301 / E264), this protein is Co-chaperone protein HscB homolog.